The sequence spans 258 residues: SufE-like protein 2, chloroplastic (258 aa).

Residues 1 to 32 (MNTSSSFKALASPPLISTSRPTTKSFPNPRFT) are disordered. A compositionally biased stretch (polar residues) spans 15–32 (LISTSRPTTKSFPNPRFT). C122 serves as the catalytic Cysteine persulfide intermediate.

The protein belongs to the SufE family. Highly expressed in flowers and pollen, and at low levels in roots, leaves and stems.

It localises to the plastid. The protein localises to the chloroplast. It functions in the pathway cofactor biosynthesis; iron-sulfur cluster biosynthesis. Functionally, participates in cysteine desulfurization mediated by NFS2. Can activate the cysteine desulfurase activity of NFS2 in vitro. Cysteine desulfurization mobilizes sulfur from L-cysteine to yield L-alanine and supplies the inorganic sulfur for iron-sulfur (Fe-S) cluster formation. This chain is SufE-like protein 2, chloroplastic (SUFE2), found in Arabidopsis thaliana (Mouse-ear cress).